The following is a 428-amino-acid chain: Adenylosuccinate synthetase (428 aa).

GTP is bound by residues 12–18 (GDEGKGK) and 40–42 (GHT). Residue aspartate 13 is the Proton acceptor of the active site. Mg(2+) contacts are provided by aspartate 13 and glycine 40. IMP contacts are provided by residues 13–16 (DEGK), 38–41 (NAGH), threonine 130, arginine 144, glutamine 225, threonine 240, and arginine 304. The Proton donor role is filled by histidine 41. 300–306 (VTTGRAR) provides a ligand contact to substrate. GTP-binding positions include arginine 306, 332–334 (KID), and 414–416 (SVG).

The protein belongs to the adenylosuccinate synthetase family. In terms of assembly, homodimer. Mg(2+) serves as cofactor.

It localises to the cytoplasm. It catalyses the reaction IMP + L-aspartate + GTP = N(6)-(1,2-dicarboxyethyl)-AMP + GDP + phosphate + 2 H(+). It functions in the pathway purine metabolism; AMP biosynthesis via de novo pathway; AMP from IMP: step 1/2. Functionally, plays an important role in the de novo pathway of purine nucleotide biosynthesis. Catalyzes the first committed step in the biosynthesis of AMP from IMP. This chain is Adenylosuccinate synthetase, found in Clostridium botulinum (strain 657 / Type Ba4).